A 373-amino-acid polypeptide reads, in one-letter code: P2Y purinoceptor 2 (373 aa).

Topologically, residues Met1–Lys32 are extracellular. 2 N-linked (GlcNAc...) asparagine glycosylation sites follow: Asn9 and Asn13. The chain crosses the membrane as a helical span at residues Tyr33–Leu59. At Cys60–Thr70 the chain is on the cytoplasmic side. The chain crosses the membrane as a helical span at residues Tyr71 to Tyr93. At Ala94–Arg110 the chain is on the extracellular side. A disulfide bond links Cys106 and Cys183. The chain crosses the membrane as a helical span at residues Phe111 to Val129. Residues His130–Arg152 lie on the Cytoplasmic side of the membrane. The chain crosses the membrane as a helical span at residues Val153 to Val172. The Extracellular portion of the chain corresponds to Thr173 to His194. The helical transmembrane segment at Phe195 to Leu220 threads the bilayer. At Met221–Thr246 the chain is on the cytoplasmic side. Residues Ile247–Tyr269 traverse the membrane as a helical segment. The Extracellular segment spans residues Ser270 to Ala287. The chain crosses the membrane as a helical span at residues Tyr288–Ala309. At Gly310–Leu373 the chain is on the cytoplasmic side. A disordered region spans residues Arg318–Leu373. Residues Ala332–Thr344 are compositionally biased toward basic residues. The span at Val345–Glu360 shows a compositional bias: basic and acidic residues.

It belongs to the G-protein coupled receptor 1 family. Spleen, testis, kidney, liver, lung, heart and brain.

It is found in the cell membrane. Functionally, receptor for ATP and UTP coupled to G-proteins that activate a phosphatidylinositol-calcium second messenger system. The affinity range is UTP = ATP &gt; ATP-gamma-S &gt;&gt; 2-methylthio-ATP = ADP. This is P2Y purinoceptor 2 (P2ry2) from Mus musculus (Mouse).